The primary structure comprises 282 residues: Acetyl-coenzyme A carboxylase carboxyl transferase subunit beta (282 aa).

A CoA carboxyltransferase N-terminal domain is found at Leu-29–Gly-282. Zn(2+) is bound by residues Cys-33, Cys-36, Cys-52, and Cys-55. The segment at Cys-33–Cys-55 adopts a C4-type zinc-finger fold.

The protein belongs to the AccD/PCCB family. In terms of assembly, acetyl-CoA carboxylase is a heterohexamer composed of biotin carboxyl carrier protein (AccB), biotin carboxylase (AccC) and two subunits each of ACCase subunit alpha (AccA) and ACCase subunit beta (AccD). The cofactor is Zn(2+).

Its subcellular location is the cytoplasm. The catalysed reaction is N(6)-carboxybiotinyl-L-lysyl-[protein] + acetyl-CoA = N(6)-biotinyl-L-lysyl-[protein] + malonyl-CoA. It participates in lipid metabolism; malonyl-CoA biosynthesis; malonyl-CoA from acetyl-CoA: step 1/1. Functionally, component of the acetyl coenzyme A carboxylase (ACC) complex. Biotin carboxylase (BC) catalyzes the carboxylation of biotin on its carrier protein (BCCP) and then the CO(2) group is transferred by the transcarboxylase to acetyl-CoA to form malonyl-CoA. This Syntrophomonas wolfei subsp. wolfei (strain DSM 2245B / Goettingen) protein is Acetyl-coenzyme A carboxylase carboxyl transferase subunit beta.